Here is a 196-residue protein sequence, read N- to C-terminus: ATP-dependent Clp protease proteolytic subunit (196 aa).

Residue S96 is the Nucleophile of the active site. H121 is a catalytic residue.

Belongs to the peptidase S14 family. In terms of assembly, fourteen ClpP subunits assemble into 2 heptameric rings which stack back to back to give a disk-like structure with a central cavity, resembling the structure of eukaryotic proteasomes.

The protein localises to the cytoplasm. It carries out the reaction Hydrolysis of proteins to small peptides in the presence of ATP and magnesium. alpha-casein is the usual test substrate. In the absence of ATP, only oligopeptides shorter than five residues are hydrolyzed (such as succinyl-Leu-Tyr-|-NHMec, and Leu-Tyr-Leu-|-Tyr-Trp, in which cleavage of the -Tyr-|-Leu- and -Tyr-|-Trp bonds also occurs).. In terms of biological role, cleaves peptides in various proteins in a process that requires ATP hydrolysis. Has a chymotrypsin-like activity. Plays a major role in the degradation of misfolded proteins. The chain is ATP-dependent Clp protease proteolytic subunit from Streptococcus uberis (strain ATCC BAA-854 / 0140J).